The sequence spans 452 residues: tRNA modification GTPase MnmE (452 aa).

(6S)-5-formyl-5,6,7,8-tetrahydrofolate contacts are provided by R22, E79, and K119. The TrmE-type G domain occupies 215 to 375; sequence GMKVVIAGRP…LRQHLKQSMG (161 aa). K(+) is bound at residue N225. Residues 225-230, 244-250, 269-272, and 333-336 each bind GTP; these read NAGKSS, TDIAGTT, DTAG, and NKAD. S229 is a Mg(2+) binding site. 3 residues coordinate K(+): T244, I246, and T249. T250 lines the Mg(2+) pocket. K452 contacts (6S)-5-formyl-5,6,7,8-tetrahydrofolate.

Belongs to the TRAFAC class TrmE-Era-EngA-EngB-Septin-like GTPase superfamily. TrmE GTPase family. Homodimer. Heterotetramer of two MnmE and two MnmG subunits. It depends on K(+) as a cofactor.

The protein resides in the cytoplasm. Its function is as follows. Exhibits a very high intrinsic GTPase hydrolysis rate. Involved in the addition of a carboxymethylaminomethyl (cmnm) group at the wobble position (U34) of certain tRNAs, forming tRNA-cmnm(5)s(2)U34. This Histophilus somni (strain 129Pt) (Haemophilus somnus) protein is tRNA modification GTPase MnmE.